The primary structure comprises 343 residues: HTH-type transcriptional regulator GntR (343 aa).

The region spanning 16 to 70 (PTLNEVARRAGVSPITASRALRGVASVAEELAQKVRDAARELGYVANPAARALAS) is the HTH lacI-type domain. The segment at residues 18–37 (LNEVARRAGVSPITASRALR) is a DNA-binding region (H-T-H motif).

With respect to regulation, free GntR fails to recognize gluconate and 6-phosphogluconate, whereas the GntR/DNA complexes recognize both ligands. It is therefore likely that GntR DNA binding induces structural changes that permit GntR to recognize effectors. Its function is as follows. Involved in the regulation of glucose metabolism. Represses its own expression as well as that of the gluconate permease GntP. It employs an effector mediated de-repression mechanism: in the absence of ligand, GntR binds to the gntR and gntP promoters and represses their expression. The release of promoter bound GntR is induced by gluconate and 6-phosphogluconate that bind with similar apparent affinities to the GntR/DNA complex. The release of GntR leads to transcription of the genes. The chain is HTH-type transcriptional regulator GntR from Pseudomonas aeruginosa (strain ATCC 15692 / DSM 22644 / CIP 104116 / JCM 14847 / LMG 12228 / 1C / PRS 101 / PAO1).